The primary structure comprises 724 residues: Protein BCH1 (724 aa).

Positions 51–65 (TTATASANDNGATSN) are enriched in low complexity. The segment at 51–71 (TTATASANDNGATSNINGQDP) is disordered. The segment at 711-724 (LNFLKNFTNDTFDN) is CHS5-binding.

It belongs to the CHAPS family. Component of the CHS5/6 complex composed of the 4 CHAPS proteins BCH1, BCH2, BUD7, and CHS6 as well as at least CHS5 and GTP-bound ARF1. The complex interacts with the cargo protein CHS3.

The protein localises to the golgi apparatus. It is found in the trans-Golgi network membrane. Member of the CHS5-ARF1P-binding proteins (CHAPS) which mediates export of specific cargo proteins, including chitin synthase CHS3. The polypeptide is Protein BCH1 (BCH1) (Saccharomyces cerevisiae (strain ATCC 204508 / S288c) (Baker's yeast)).